A 305-amino-acid polypeptide reads, in one-letter code: MRLVFAGTPLAAVPSLQRLAASGHEVALVVTRADAPLGRKRVLTPSPVAAEAERLGIPTLRVNRLDDDATARIAAVGAELGVIVAYGGLVREPLLSTPARGWINLHFSLLPRWRGAAPVQRSIMAGERVTGASVFQLERGMDTGPVFSMEERPTGDHETAGHVLDALAVQGADLLARTVDAIGAGTAVARPQEGEPTLAPKTTIDDGRVDWARSADEVLARIRGVTPEPGAHTSVDDVRLKIHRAAALRDAAPLEPGRIAALDGRVAIGTASHPVELIQVQPAGKSPMPAADWWRGVTTKDVIAR.

(6S)-5,6,7,8-tetrahydrofolate is bound at residue 108-111 (SLLP).

The protein belongs to the Fmt family.

The catalysed reaction is L-methionyl-tRNA(fMet) + (6R)-10-formyltetrahydrofolate = N-formyl-L-methionyl-tRNA(fMet) + (6S)-5,6,7,8-tetrahydrofolate + H(+). Attaches a formyl group to the free amino group of methionyl-tRNA(fMet). The formyl group appears to play a dual role in the initiator identity of N-formylmethionyl-tRNA by promoting its recognition by IF2 and preventing the misappropriation of this tRNA by the elongation apparatus. In Clavibacter sepedonicus (Clavibacter michiganensis subsp. sepedonicus), this protein is Methionyl-tRNA formyltransferase.